Here is a 227-residue protein sequence, read N- to C-terminus: Ribonuclease 3 (227 aa).

One can recognise an RNase III domain in the interval 4–133 (FETLEKLLSY…LIAAIYLDSN (130 aa)). Glu-46 contributes to the Mg(2+) binding site. Asp-50 is a catalytic residue. Mg(2+)-binding residues include Asn-119 and Glu-122. Residue Glu-122 is part of the active site. The region spanning 158 to 226 (DPKTALQEWA…ARSLLHRLKN (69 aa)) is the DRBM domain.

This sequence belongs to the ribonuclease III family. Homodimer. Mg(2+) serves as cofactor.

The protein resides in the cytoplasm. It carries out the reaction Endonucleolytic cleavage to 5'-phosphomonoester.. In terms of biological role, digests double-stranded RNA. Involved in the processing of primary rRNA transcript to yield the immediate precursors to the large and small rRNAs (23S and 16S). Processes some mRNAs, and tRNAs when they are encoded in the rRNA operon. Processes pre-crRNA and tracrRNA of type II CRISPR loci if present in the organism. The chain is Ribonuclease 3 from Rickettsia massiliae (strain Mtu5).